The chain runs to 156 residues: ATP synthase subunit b (156 aa).

Residues 4–26 traverse the membrane as a helical segment; sequence GATFWGPMISFALFVWFTMKFVW.

It belongs to the ATPase B chain family. F-type ATPases have 2 components, F(1) - the catalytic core - and F(0) - the membrane proton channel. F(1) has five subunits: alpha(3), beta(3), gamma(1), delta(1), epsilon(1). F(0) has three main subunits: a(1), b(2) and c(10-14). The alpha and beta chains form an alternating ring which encloses part of the gamma chain. F(1) is attached to F(0) by a central stalk formed by the gamma and epsilon chains, while a peripheral stalk is formed by the delta and b chains.

It is found in the cell inner membrane. F(1)F(0) ATP synthase produces ATP from ADP in the presence of a proton or sodium gradient. F-type ATPases consist of two structural domains, F(1) containing the extramembraneous catalytic core and F(0) containing the membrane proton channel, linked together by a central stalk and a peripheral stalk. During catalysis, ATP synthesis in the catalytic domain of F(1) is coupled via a rotary mechanism of the central stalk subunits to proton translocation. Functionally, component of the F(0) channel, it forms part of the peripheral stalk, linking F(1) to F(0). This Halorhodospira halophila (strain DSM 244 / SL1) (Ectothiorhodospira halophila (strain DSM 244 / SL1)) protein is ATP synthase subunit b.